We begin with the raw amino-acid sequence, 257 residues long: Undecaprenyl-diphosphatase (257 aa).

Helical transmembrane passes span 4 to 24 (LIRVVILAIVQGIAEFLPISS), 41 to 61 (SVTLEIILHAGTLGSILVVFW), 74 to 94 (VIGLLVIGTLPAVVIGLTIKT), 103 to 123 (PLLAGAMLIVTGVMLIVLGRL), 133 to 153 (LGLGAAFLVGCFQAFAILPGI), 173 to 193 (SVTFSFLLAIPAILGATVLAI), 209 to 229 (VLSIGAAVAFAVGIVALKWLI), and 236 to 256 (RLHWFAYWCIPAGLLVVLLNL).

Belongs to the UppP family.

Its subcellular location is the cell inner membrane. It catalyses the reaction di-trans,octa-cis-undecaprenyl diphosphate + H2O = di-trans,octa-cis-undecaprenyl phosphate + phosphate + H(+). In terms of biological role, catalyzes the dephosphorylation of undecaprenyl diphosphate (UPP). Confers resistance to bacitracin. The polypeptide is Undecaprenyl-diphosphatase (Rhodopirellula baltica (strain DSM 10527 / NCIMB 13988 / SH1)).